Here is a 537-residue protein sequence, read N- to C-terminus: CTP synthase (537 aa).

The segment at 1–268 (MPAKFIFVTG…DSIVVERLKL (268 aa)) is amidoligase domain. Residue serine 14 coordinates CTP. Serine 14 lines the UTP pocket. 15–20 (SLGKGI) contacts ATP. Tyrosine 55 provides a ligand contact to L-glutamine. ATP is bound at residue aspartate 72. Residues aspartate 72 and glutamate 142 each coordinate Mg(2+). CTP contacts are provided by residues 149-151 (DIE), 189-194 (KTKPTQ), and lysine 225. UTP is bound by residues 189 to 194 (KTKPTQ) and lysine 225. Positions 293 to 534 (EIALVGKYVT…IGAACRRAGG (242 aa)) constitute a Glutamine amidotransferase type-1 domain. Position 354 (glycine 354) interacts with L-glutamine. Residue cysteine 381 is the Nucleophile; for glutamine hydrolysis of the active site. L-glutamine is bound by residues 382-385 (LGMQ), glutamate 405, and arginine 462. Catalysis depends on residues histidine 507 and glutamate 509.

Belongs to the CTP synthase family. As to quaternary structure, homotetramer.

The catalysed reaction is UTP + L-glutamine + ATP + H2O = CTP + L-glutamate + ADP + phosphate + 2 H(+). It catalyses the reaction L-glutamine + H2O = L-glutamate + NH4(+). The enzyme catalyses UTP + NH4(+) + ATP = CTP + ADP + phosphate + 2 H(+). The protein operates within pyrimidine metabolism; CTP biosynthesis via de novo pathway; CTP from UDP: step 2/2. Allosterically activated by GTP, when glutamine is the substrate; GTP has no effect on the reaction when ammonia is the substrate. The allosteric effector GTP functions by stabilizing the protein conformation that binds the tetrahedral intermediate(s) formed during glutamine hydrolysis. Inhibited by the product CTP, via allosteric rather than competitive inhibition. Catalyzes the ATP-dependent amination of UTP to CTP with either L-glutamine or ammonia as the source of nitrogen. Regulates intracellular CTP levels through interactions with the four ribonucleotide triphosphates. The sequence is that of CTP synthase from Moorella thermoacetica (strain ATCC 39073 / JCM 9320).